The primary structure comprises 529 residues: Bifunctional purine biosynthesis protein PurH (529 aa).

The MGS-like domain maps to 1 to 148; it reads MQQRRPVRRA…KNHKDVAIVV (148 aa).

It belongs to the PurH family.

It carries out the reaction (6R)-10-formyltetrahydrofolate + 5-amino-1-(5-phospho-beta-D-ribosyl)imidazole-4-carboxamide = 5-formamido-1-(5-phospho-D-ribosyl)imidazole-4-carboxamide + (6S)-5,6,7,8-tetrahydrofolate. The enzyme catalyses IMP + H2O = 5-formamido-1-(5-phospho-D-ribosyl)imidazole-4-carboxamide. Its pathway is purine metabolism; IMP biosynthesis via de novo pathway; 5-formamido-1-(5-phospho-D-ribosyl)imidazole-4-carboxamide from 5-amino-1-(5-phospho-D-ribosyl)imidazole-4-carboxamide (10-formyl THF route): step 1/1. It functions in the pathway purine metabolism; IMP biosynthesis via de novo pathway; IMP from 5-formamido-1-(5-phospho-D-ribosyl)imidazole-4-carboxamide: step 1/1. This is Bifunctional purine biosynthesis protein PurH from Salmonella paratyphi B (strain ATCC BAA-1250 / SPB7).